We begin with the raw amino-acid sequence, 519 residues long: Probable cytosol aminopeptidase (519 aa).

Mn(2+) contacts are provided by lysine 283 and aspartate 288. The active site involves lysine 295. Positions 306, 365, and 367 each coordinate Mn(2+). The active site involves arginine 369.

This sequence belongs to the peptidase M17 family. Mn(2+) serves as cofactor.

It is found in the cytoplasm. It carries out the reaction Release of an N-terminal amino acid, Xaa-|-Yaa-, in which Xaa is preferably Leu, but may be other amino acids including Pro although not Arg or Lys, and Yaa may be Pro. Amino acid amides and methyl esters are also readily hydrolyzed, but rates on arylamides are exceedingly low.. It catalyses the reaction Release of an N-terminal amino acid, preferentially leucine, but not glutamic or aspartic acids.. Functionally, presumably involved in the processing and regular turnover of intracellular proteins. Catalyzes the removal of unsubstituted N-terminal amino acids from various peptides. The polypeptide is Probable cytosol aminopeptidase (Mycobacterium marinum (strain ATCC BAA-535 / M)).